The primary structure comprises 427 residues: Cholecystokinin receptor type A (427 aa).

Over 1 to 41 (MDAVASLLGNASGIPPPCELGLDNETLFCLDQPPPSKEWQP) the chain is Extracellular. N-linked (GlcNAc...) asparagine glycans are attached at residues Asn-10 and Asn-24. Cys-18 and Cys-29 are oxidised to a cystine. The helical transmembrane segment at 42–67 (AVQILLYSLIFLLSVLGNTLVITVLI) threads the bilayer. Residues 68 to 77 (RNKRMRTVTN) are Cytoplasmic-facing. The chain crosses the membrane as a helical span at residues 78–104 (IFLLSLAISDLMLCLFCMPFNLIPNLL). The Extracellular segment spans residues 105–115 (KDFIFGSALCK). A disulfide bridge connects residues Cys-114 and Cys-196. The helical transmembrane segment at 116–137 (TTTYLMGTSVSVSTLNLVAISL) threads the bilayer. Topologically, residues 138–157 (ERYGAICKPLQSRVWQTKSH) are cytoplasmic. Residues 158–178 (ALKVIAATWCLSFAIMTPYPI) form a helical membrane-spanning segment. The Extracellular portion of the chain corresponds to 179 to 210 (YSNLVPFTKTNNQTANMCRFLLPSDVMQQAWH). Asn-190 carries an N-linked (GlcNAc...) asparagine glycan. The helical transmembrane segment at 211-234 (TFLLLILFLIPGIVMMVAYGMISL) threads the bilayer. Over 235–312 (ELYQGIKFDA…TLMAKKRVIR (78 aa)) the chain is Cytoplasmic. Residues 313 to 333 (MLMVIVVLFFLCWMPIFSANA) form a helical membrane-spanning segment. The Extracellular portion of the chain corresponds to 334–348 (WRAYDTVSAERRLSG). The helical transmembrane segment at 349–372 (TPISFILLLSYTSSCVNPIIYCFM) threads the bilayer. Topologically, residues 373-427 (NRRFRLGFMATFPCCPNPGPPGPRAEAGEEEEGRTTRASLSRYSYSHMSASAPPS) are cytoplasmic. The S-palmitoyl cysteine moiety is linked to residue Cys-386. Residues 391 to 427 (GPPGPRAEAGEEEEGRTTRASLSRYSYSHMSASAPPS) are disordered. Residues 411–421 (SLSRYSYSHMS) show a composition bias toward polar residues.

This sequence belongs to the G-protein coupled receptor 1 family.

It localises to the cell membrane. Receptor for cholecystokinin. Mediates pancreatic growth and enzyme secretion, smooth muscle contraction of the gall bladder and stomach. Has a 1000-fold higher affinity for CCK rather than for gastrin. It modulates feeding and dopamine-induced behavior in the central and peripheral nervous system. This receptor mediates its action by association with G proteins that activate a phosphatidylinositol-calcium second messenger system. This Oryctolagus cuniculus (Rabbit) protein is Cholecystokinin receptor type A (CCKAR).